The following is a 139-amino-acid chain: Single-stranded DNA-binding protein 2 (139 aa).

The region spanning 1-104 (MLNRTVLVGR…VVADSVQFLE (104 aa)) is the SSB domain. A disordered region spans residues 103 to 139 (LEPKNNNKQNNQQHNGQTQTGNNPFDNTEEDFSDLPF). Residues 106–125 (KNNNKQNNQQHNGQTQTGNN) show a composition bias toward low complexity. Residues 129–139 (NTEEDFSDLPF) are compositionally biased toward acidic residues.

As to quaternary structure, homotetramer.

The protein is Single-stranded DNA-binding protein 2 (ssb-p) of Staphylococcus aureus (strain COL).